Here is a 344-residue protein sequence, read N- to C-terminus: Phosphate acyltransferase (344 aa).

This sequence belongs to the PlsX family. As to quaternary structure, homodimer. Probably interacts with PlsY.

It localises to the cytoplasm. The catalysed reaction is a fatty acyl-[ACP] + phosphate = an acyl phosphate + holo-[ACP]. It functions in the pathway lipid metabolism; phospholipid metabolism. In terms of biological role, catalyzes the reversible formation of acyl-phosphate (acyl-PO(4)) from acyl-[acyl-carrier-protein] (acyl-ACP). This enzyme utilizes acyl-ACP as fatty acyl donor, but not acyl-CoA. This is Phosphate acyltransferase from Sphingopyxis alaskensis (strain DSM 13593 / LMG 18877 / RB2256) (Sphingomonas alaskensis).